Here is a 1155-residue protein sequence, read N- to C-terminus: DNA-directed RNA polymerase subunit beta (1155 aa).

Belongs to the RNA polymerase beta chain family. As to quaternary structure, the RNAP catalytic core consists of 2 alpha, 1 beta, 1 beta' and 1 omega subunit. When a sigma factor is associated with the core the holoenzyme is formed, which can initiate transcription.

The catalysed reaction is RNA(n) + a ribonucleoside 5'-triphosphate = RNA(n+1) + diphosphate. DNA-dependent RNA polymerase catalyzes the transcription of DNA into RNA using the four ribonucleoside triphosphates as substrates. The chain is DNA-directed RNA polymerase subunit beta from Borrelia garinii subsp. bavariensis (strain ATCC BAA-2496 / DSM 23469 / PBi) (Borreliella bavariensis).